A 216-amino-acid polypeptide reads, in one-letter code: Ceramide-1-phosphate transfer protein (216 aa).

The an N-acylsphingoid base 1-phosphate site is built by aspartate 56, lysine 60, arginine 108, arginine 112, and histidine 152.

It belongs to the GLTP family.

The protein resides in the cytoplasm. The protein localises to the cytosol. It localises to the golgi apparatus. It is found in the trans-Golgi network membrane. Its subcellular location is the cell membrane. The protein resides in the endosome membrane. The protein localises to the nucleus outer membrane. The enzyme catalyses N-(hexadecanoyl)-sphing-4-enine-1-phosphate(in) = N-(hexadecanoyl)-sphing-4-enine-1-phosphate(out). The catalysed reaction is N-(9Z-octadecenoyl)-sphing-4-enine-1-phosphate(in) = N-(9Z-octadecenoyl)-sphing-4-enine-1-phosphate(out). Its function is as follows. Mediates the intracellular transfer of ceramide-1-phosphate (C1P) between organelle membranes and the cell membrane. Required for normal structure of the Golgi stacks. Can bind phosphoceramides with a variety of aliphatic chains, but has a preference for lipids with saturated C16:0 or monounsaturated C18:1 aliphatic chains, and is inefficient with phosphoceramides containing lignoceryl (C24:0). Plays a role in the regulation of the cellular levels of ceramide-1-phosphate, and thereby contributes to the regulation of phospholipase PLA2G4A activity and the release of arachidonic acid. Has no activity with galactosylceramide, lactosylceramide, sphingomyelin, phosphatidylcholine, phosphatidic acid and ceramide. C1P transfer is stimulated by phosphatidylserine in C1P source vesicles. Regulates autophagy, inflammasome mediated IL1B and IL18 processing, and pyroptosis, but not apoptosis. The polypeptide is Ceramide-1-phosphate transfer protein (Cptp) (Rattus norvegicus (Rat)).